The chain runs to 162 residues: NADH-quinone oxidoreductase subunit I (162 aa).

2 consecutive 4Fe-4S ferredoxin-type domains span residues Leu-52–Gly-82 and Thr-93–Asn-122. Cys-62, Cys-65, Cys-68, Cys-72, Cys-102, Cys-105, Cys-108, and Cys-112 together coordinate [4Fe-4S] cluster.

Belongs to the complex I 23 kDa subunit family. NDH-1 is composed of 14 different subunits. Subunits NuoA, H, J, K, L, M, N constitute the membrane sector of the complex. [4Fe-4S] cluster serves as cofactor.

It localises to the cell inner membrane. It carries out the reaction a quinone + NADH + 5 H(+)(in) = a quinol + NAD(+) + 4 H(+)(out). Its function is as follows. NDH-1 shuttles electrons from NADH, via FMN and iron-sulfur (Fe-S) centers, to quinones in the respiratory chain. The immediate electron acceptor for the enzyme in this species is believed to be ubiquinone. Couples the redox reaction to proton translocation (for every two electrons transferred, four hydrogen ions are translocated across the cytoplasmic membrane), and thus conserves the redox energy in a proton gradient. This is NADH-quinone oxidoreductase subunit I from Xanthobacter autotrophicus (strain ATCC BAA-1158 / Py2).